Here is a 138-residue protein sequence, read N- to C-terminus: Putative pre-16S rRNA nuclease (138 aa).

It belongs to the YqgF nuclease family.

Its subcellular location is the cytoplasm. Could be a nuclease involved in processing of the 5'-end of pre-16S rRNA. This chain is Putative pre-16S rRNA nuclease, found in Polaromonas sp. (strain JS666 / ATCC BAA-500).